Here is a 229-residue protein sequence, read N- to C-terminus: Ras-related protein rab-39 (229 aa).

73 to 77 provides a ligand contact to GTP; that stretch reads DTAGQ. Residues cysteine 227 and cysteine 229 are each lipidated (S-geranylgeranyl cysteine). Cysteine 229 is subject to Cysteine methyl ester.

It belongs to the small GTPase superfamily. Rab family. As to quaternary structure, interacts (in GTP-bound form) with Ras association domain-containing protein rsf-1.

It localises to the cell membrane. Its subcellular location is the cytoplasmic vesicle membrane. The protein localises to the golgi apparatus. Small GTPases Rab involved in autophagy. The small GTPases Rab are key regulators of intracellular membrane trafficking, from the formation of transport vesicles to their fusion with membranes. Rabs cycle between an inactive GDP-bound form and an active GTP-bound form that is able to recruit to membranes different sets of downstream effectors directly responsible for vesicle formation, movement, tethering and fusion. Involved in positively regulating the oxidative stress response, perhaps in concert with the Ras association domain-containing protein rsf-1. The polypeptide is Ras-related protein rab-39 (Caenorhabditis elegans).